The primary structure comprises 93 residues: MKFAVILLFSLVVLAVASESVEEVRREIDIEDLPEQQRGCADLRQPCTEGDDCSCCGSEGVCNCSHPHKKGCYCKTAGPLEKLAKKFKGCKNK.

Positions 1–18 (MKFAVILLFSLVVLAVAS) are cleaved as a signal peptide. Positions 19–38 (ESVEEVRREIDIEDLPEQQR) are excised as a propeptide.

This sequence belongs to the neurotoxin 31 family. Contains 5 disulfide bonds. In terms of tissue distribution, expressed by the venom gland.

The protein resides in the secreted. This Lycosa singoriensis (Wolf spider) protein is U12-lycotoxin-Ls1a.